The chain runs to 500 residues: Protein-tyrosine sulfotransferase (500 aa).

An N-terminal signal peptide occupies residues 1-24; it reads MQMNSVWKLSLGLLLLSSVIGSFA. Over 25 to 467 the chain is Lumenal; sequence ELDFGHCETL…SVLGEMGEEK (443 aa). Catalysis depends on residues R121 and E142. N-linked (GlcNAc...) asparagine glycosylation is found at N156, N248, N315, N343, N359, and N395. Residues 468–488 form a helical membrane-spanning segment; the sequence is LWKFVPVALMLLLIVLFFLFV. At 489-500 the chain is on the cytoplasmic side; sequence NAKRRRTSKVKI.

In terms of tissue distribution, expressed throughout the plant body, highest levels of expression are in the root apical meristem.

The protein localises to the golgi apparatus membrane. It carries out the reaction L-tyrosyl-[protein] + 3'-phosphoadenylyl sulfate = O-sulfo-L-tyrosine-[protein] + adenosine 3',5'-bisphosphate + H(+). Its function is as follows. Catalyzes the O-sulfation of tyrosine residues within acidic motifs of polypeptides. This is Protein-tyrosine sulfotransferase (TPST) from Arabidopsis thaliana (Mouse-ear cress).